The sequence spans 930 residues: Type I restriction enzyme SsaAORF53P endonuclease subunit (930 aa).

The region spanning 254–418 (HQATETSNNG…DGRSTADIFG (165 aa)) is the Helicase ATP-binding domain. Residue 268–274 (TTGSGKT) participates in ATP binding.

The protein belongs to the HsdR family. As to quaternary structure, the type I restriction/modification system is composed of three polypeptides R, M and S.

It carries out the reaction Endonucleolytic cleavage of DNA to give random double-stranded fragments with terminal 5'-phosphates, ATP is simultaneously hydrolyzed.. Its function is as follows. The restriction (R) subunit of a type I restriction enzyme that recognizes an undetermined sequence and cleaves a random distance away. Subunit R is required for both nuclease and ATPase activities, but not for modification. After locating a non-methylated recognition site, the enzyme complex serves as a molecular motor that translocates DNA in an ATP-dependent manner until a collision occurs that triggers cleavage. This is Type I restriction enzyme SsaAORF53P endonuclease subunit from Staphylococcus saprophyticus subsp. saprophyticus (strain ATCC 15305 / DSM 20229 / NCIMB 8711 / NCTC 7292 / S-41).